Consider the following 150-residue polypeptide: Urease accessory protein UreE (150 aa).

It belongs to the UreE family.

It localises to the cytoplasm. Its function is as follows. Involved in urease metallocenter assembly. Binds nickel. Probably functions as a nickel donor during metallocenter assembly. This chain is Urease accessory protein UreE, found in Staphylococcus aureus (strain Mu3 / ATCC 700698).